The chain runs to 66 residues: Large ribosomal subunit protein bL31 (66 aa).

Positions 16, 18, 36, and 39 each coordinate Zn(2+).

It belongs to the bacterial ribosomal protein bL31 family. Type A subfamily. As to quaternary structure, part of the 50S ribosomal subunit. Requires Zn(2+) as cofactor.

Its function is as follows. Binds the 23S rRNA. This is Large ribosomal subunit protein bL31 from Campylobacter jejuni subsp. jejuni serotype O:6 (strain 81116 / NCTC 11828).